Reading from the N-terminus, the 1001-residue chain is uncharacterized protein (1001 aa).

Positions 939-948 (KVVDNKRDAS) are enriched in basic and acidic residues. The disordered stretch occupies residues 939–1001 (KVVDNKRDAS…HTSKRVQKKN (63 aa)). Serine 948 and serine 950 each carry phosphoserine.

This is an uncharacterized protein from Schizosaccharomyces pombe (strain 972 / ATCC 24843) (Fission yeast).